The sequence spans 272 residues: MSSINGIDNIKFDYEFSNSLYYRNSIFFSIIFFIIYKKSSYITENFFGELVKKAYTTLTEKKKLEWDQRVVSMIHAFLVLPFCIISAVESFKYGDIFYFQNDSLLMVLSISSGYFIWDLIICYKDPKLVGTPMIIHAIMGLSSNIYVALPHGRPCFVPIVAILLITEISTIPLNMKGFIQVVNSKSKYYNWSLGAFVITFLVSRCIIGLPFDIYLVYGCIQRWDVFPMDKSLVFITECGIQFFLNSYWSFLLIKKLYQTYLNPIPNHKKNED.

7 helical membrane-spanning segments follow: residues 16 to 36 (FSNS…FIIY), 71 to 91 (VSMI…VESF), 103 to 123 (SLLM…IICY), 128 to 148 (LVGT…IYVA), 155 to 175 (CFVP…PLNM), 196 to 216 (FVIT…IYLV), and 233 to 253 (VFIT…FLLI). The TLC domain occupies 61–261 (KKKLEWDQRV…LIKKLYQTYL (201 aa)).

Belongs to the TLCD4 family.

It localises to the membrane. This is TLC domain-containing protein 4 C (tlcd4c) from Dictyostelium discoideum (Social amoeba).